We begin with the raw amino-acid sequence, 496 residues long: Polyamine oxidase 6 (496 aa).

Residues M1–G27 form the signal peptide. 2 residues coordinate FAD: E61 and R69. N-linked (GlcNAc...) asparagine glycosylation is found at N103 and N150. Residue V261 participates in FAD binding. N-linked (GlcNAc...) asparagine glycosylation is present at N278. E454 contacts FAD.

The protein belongs to the flavin monoamine oxidase family. The cofactor is FAD.

Its subcellular location is the secreted. It is found in the extracellular space. It localises to the apoplast. The protein operates within amine and polyamine degradation; spermine degradation. Flavoenzyme involved in polyamine back-conversion. Catalyzes the oxidation of the secondary amino group of polyamines, such as spermine and spermidine. The sequence is that of Polyamine oxidase 6 from Oryza sativa subsp. japonica (Rice).